A 214-amino-acid chain; its full sequence is S-crystallin 1 (214 aa).

In terms of domain architecture, GST N-terminal spans 2–79 (PSYTLHYFNH…YLAREFGFHG (78 aa)). The 134-residue stretch at 81 to 214 (NNMEMARVDF…YLQRRCRTDF (134 aa)) folds into the GST C-terminal domain.

Belongs to the GST superfamily. As to expression, lens.

In terms of biological role, S-crystallins are structural components of squids and octopi eye lens. Contains relatively little GST activity (1/1000 of that of mammalian GST enzyme). The chain is S-crystallin 1 (OCTS1) from Octopus vulgaris (Common octopus).